We begin with the raw amino-acid sequence, 367 residues long: Aurora kinase (367 aa).

Residues 30–49 (TTATNGAPPQARVQPGKGYR) are disordered. The 252-residue stretch at 109 to 360 (FEIGKVLGKG…LKEVKKHPWI (252 aa)) folds into the Protein kinase domain. Residues 115 to 123 (LGKGKFGRV) and lysine 138 each bind ATP. Aspartate 232 serves as the catalytic Proton acceptor.

Belongs to the protein kinase superfamily. Ser/Thr protein kinase family. Aurora subfamily.

The protein localises to the nucleus. Its subcellular location is the cytoplasm. The protein resides in the cytoskeleton. It localises to the spindle. It is found in the chromosome. The protein localises to the centromere. Its subcellular location is the kinetochore. It carries out the reaction L-seryl-[protein] + ATP = O-phospho-L-seryl-[protein] + ADP + H(+). The enzyme catalyses L-threonyl-[protein] + ATP = O-phospho-L-threonyl-[protein] + ADP + H(+). Component of the chromosomal passenger complex (CPC), a complex that acts as a key regulator of chromosome segregation and cytokinesis. Has a role in error-correction of aberrent kinetochore-microtubule attachments to ensure that sister kinetochores become bioriented and connect to opposite poles by promoting spindle assembly checkpoint signaling. The sequence is that of Aurora kinase (IPL1) from Eremothecium gossypii (strain ATCC 10895 / CBS 109.51 / FGSC 9923 / NRRL Y-1056) (Yeast).